The sequence spans 201 residues: Recombination protein RecR (201 aa).

The C4-type zinc finger occupies 57-72 (CADCRTFTEQEVCNIC). The 96-residue stretch at 81–176 (GQICVVESPA…EASRIAHGVP (96 aa)) folds into the Toprim domain.

It belongs to the RecR family.

May play a role in DNA repair. It seems to be involved in an RecBC-independent recombinational process of DNA repair. It may act with RecF and RecO. The polypeptide is Recombination protein RecR (Shigella boydii serotype 18 (strain CDC 3083-94 / BS512)).